The chain runs to 186 residues: Putative 3-methyladenine DNA glycosylase (186 aa).

It belongs to the DNA glycosylase MPG family.

The chain is Putative 3-methyladenine DNA glycosylase from Borreliella burgdorferi (strain ATCC 35210 / DSM 4680 / CIP 102532 / B31) (Borrelia burgdorferi).